Here is a 317-residue protein sequence, read N- to C-terminus: Protein-L-isoaspartate O-methyltransferase (317 aa).

S59 is a catalytic residue.

This sequence belongs to the methyltransferase superfamily. L-isoaspartyl/D-aspartyl protein methyltransferase family. Monomer.

The protein localises to the cytoplasm. It carries out the reaction [protein]-L-isoaspartate + S-adenosyl-L-methionine = [protein]-L-isoaspartate alpha-methyl ester + S-adenosyl-L-homocysteine. Catalyzes the methyl esterification of L-isoaspartyl residues in peptides and proteins that result from spontaneous decomposition of normal L-aspartyl and L-asparaginyl residues. It plays a role in the repair and/or degradation of damaged proteins. The polypeptide is Protein-L-isoaspartate O-methyltransferase (pcm) (Thermotoga maritima (strain ATCC 43589 / DSM 3109 / JCM 10099 / NBRC 100826 / MSB8)).